We begin with the raw amino-acid sequence, 328 residues long: Arabinose 5-phosphate isomerase KdsD (328 aa).

The SIS domain maps to 41–184 (ACEKMFNCTG…AVALLKARGF (144 aa)). Residues 75–76 (GT), histidine 82, histidine 88, 114–123 (ALIPVLKRLH), and 148–150 (KVP) each bind substrate. Zn(2+) is bound at residue histidine 82. Residues 210–268 (MHTGDEIPHVNKHATLRDALLEITRKNLGMTVICDESMKIDGIFTDGDLRRMFDMGGDM) enclose the CBS 1 domain. Glutamate 275 contributes to the substrate binding site. A CBS 2 domain is found at 277 to 328 (MTPGGIRVRPGILAVDALNLMQSRHITSVLVADGDQLLGVLHMHDLLRAGVV).

It belongs to the SIS family. GutQ/KpsF subfamily. Homotetramer.

The catalysed reaction is D-arabinose 5-phosphate = D-ribulose 5-phosphate. Its pathway is carbohydrate biosynthesis; 3-deoxy-D-manno-octulosonate biosynthesis; 3-deoxy-D-manno-octulosonate from D-ribulose 5-phosphate: step 1/3. The protein operates within bacterial outer membrane biogenesis; lipopolysaccharide biosynthesis. In terms of biological role, involved in the biosynthesis of 3-deoxy-D-manno-octulosonate (KDO), a unique 8-carbon sugar component of lipopolysaccharides (LPSs). Catalyzes the reversible aldol-ketol isomerization between D-ribulose 5-phosphate (Ru5P) and D-arabinose 5-phosphate (A5P). The chain is Arabinose 5-phosphate isomerase KdsD (kdsD) from Salmonella typhi.